The chain runs to 317 residues: Inositol oxygenase 2 (317 aa).

Residues arginine 57 and 115 to 117 (DES) contribute to the substrate site. Fe cation contacts are provided by histidine 128, histidine 153, and aspartate 154. Substrate-binding positions include lysine 157 and 174 to 175 (GD). Residues histidine 226, histidine 252, and aspartate 285 each coordinate Fe cation. 252–253 (HS) lines the substrate pocket.

This sequence belongs to the myo-inositol oxygenase family. Fe cation serves as cofactor. As to expression, expressed mainly in roots, stems, flowers and siliques. Low expression in leaves.

Its subcellular location is the cytoplasm. The catalysed reaction is myo-inositol + O2 = D-glucuronate + H2O + H(+). Its pathway is polyol metabolism; myo-inositol degradation into D-glucuronate; D-glucuronate from myo-inositol: step 1/1. In terms of biological role, involved in the biosynthesis of UDP-glucuronic acid (UDP-GlcA), providing nucleotide sugars for cell-wall polymers. May be also involved in plant ascorbate biosynthesis. The sequence is that of Inositol oxygenase 2 (MIOX2) from Arabidopsis thaliana (Mouse-ear cress).